A 122-amino-acid polypeptide reads, in one-letter code: NADPH-dependent 7-cyano-7-deazaguanine reductase (122 aa).

Cys34 serves as the catalytic Thioimide intermediate. Asp41 serves as the catalytic Proton donor. Residues 56–58 and 75–76 each bind substrate; these read VEL and HE.

This sequence belongs to the GTP cyclohydrolase I family. QueF type 1 subfamily.

Its subcellular location is the cytoplasm. It catalyses the reaction 7-aminomethyl-7-carbaguanine + 2 NADP(+) = 7-cyano-7-deazaguanine + 2 NADPH + 3 H(+). Its pathway is tRNA modification; tRNA-queuosine biosynthesis. Functionally, catalyzes the NADPH-dependent reduction of 7-cyano-7-deazaguanine (preQ0) to 7-aminomethyl-7-deazaguanine (preQ1). The sequence is that of NADPH-dependent 7-cyano-7-deazaguanine reductase from Anaeromyxobacter dehalogenans (strain 2CP-C).